The following is a 307-amino-acid chain: Porphobilinogen deaminase (307 aa).

Cysteine 239 is modified (S-(dipyrrolylmethanemethyl)cysteine).

Belongs to the HMBS family. As to quaternary structure, monomer. Dipyrromethane serves as cofactor.

The enzyme catalyses 4 porphobilinogen + H2O = hydroxymethylbilane + 4 NH4(+). The protein operates within porphyrin-containing compound metabolism; protoporphyrin-IX biosynthesis; coproporphyrinogen-III from 5-aminolevulinate: step 2/4. Functionally, tetrapolymerization of the monopyrrole PBG into the hydroxymethylbilane pre-uroporphyrinogen in several discrete steps. The polypeptide is Porphobilinogen deaminase (hemC) (Campylobacter jejuni subsp. jejuni serotype O:2 (strain ATCC 700819 / NCTC 11168)).